We begin with the raw amino-acid sequence, 361 residues long: Phospho-N-acetylmuramoyl-pentapeptide-transferase (361 aa).

Transmembrane regions (helical) follow at residues 25 to 45 (TGGA…WIID), 72 to 92 (TPTM…LLWA), 95 to 115 (LNPY…VGFY), 135 to 155 (LLIE…LGRA), 169 to 189 (VMLN…VGAG), 200 to 220 (GLAI…SYLA), 240 to 260 (LAVL…FNAP), 264 to 284 (IFMG…IAVA), 289 to 309 (IVLA…IVQV), and 338 to 358 (QIVI…LSTL).

It belongs to the glycosyltransferase 4 family. MraY subfamily. It depends on Mg(2+) as a cofactor.

Its subcellular location is the cell inner membrane. The enzyme catalyses UDP-N-acetyl-alpha-D-muramoyl-L-alanyl-gamma-D-glutamyl-meso-2,6-diaminopimeloyl-D-alanyl-D-alanine + di-trans,octa-cis-undecaprenyl phosphate = di-trans,octa-cis-undecaprenyl diphospho-N-acetyl-alpha-D-muramoyl-L-alanyl-D-glutamyl-meso-2,6-diaminopimeloyl-D-alanyl-D-alanine + UMP. It functions in the pathway cell wall biogenesis; peptidoglycan biosynthesis. Its function is as follows. Catalyzes the initial step of the lipid cycle reactions in the biosynthesis of the cell wall peptidoglycan: transfers peptidoglycan precursor phospho-MurNAc-pentapeptide from UDP-MurNAc-pentapeptide onto the lipid carrier undecaprenyl phosphate, yielding undecaprenyl-pyrophosphoryl-MurNAc-pentapeptide, known as lipid I. This is Phospho-N-acetylmuramoyl-pentapeptide-transferase from Rhodopseudomonas palustris (strain ATCC BAA-98 / CGA009).